The chain runs to 170 residues: Thialysine N-epsilon-acetyltransferase (170 aa).

The N-acetyltransferase domain occupies 4–166 (TRIREARESD…FRFEGEAMRE (163 aa)). Position 27–28 (27–28 (FE)) interacts with substrate. Lysine 29 bears the N6-acetyllysine mark. A substrate-binding site is contributed by glutamate 92. Acetyl-CoA contacts are provided by residues 94-96 (IYV), 102-107 (GQGIGT), 133-135 (NKK), and tyrosine 140. Tyrosine 140 functions as the Proton donor in the catalytic mechanism. Glutamate 152 is a substrate binding site.

Belongs to the acetyltransferase family. In terms of assembly, homodimer.

The protein localises to the cytoplasm. The catalysed reaction is S-(2-aminoethyl)-L-cysteine + acetyl-CoA = S-(2-acetamidoethyl)-L-cysteine + CoA + H(+). It carries out the reaction an alkane-alpha,omega-diamine + acetyl-CoA = an N-acetylalkane-alpha,omega-diamine + CoA + H(+). Its function is as follows. Catalyzes the N-acetylation of the amino acid thialysine (S-(2-aminoethyl)-L-cysteine), a L-lysine analog with the 4-methylene group substituted with a sulfur. May also catalyze acetylation of polyamines, such as norspermidine, spermidine or spermine. However, ability to acetylate polyamines is weak, suggesting that it does not act as a diamine acetyltransferase in vivo. In Mus musculus (Mouse), this protein is Thialysine N-epsilon-acetyltransferase.